The sequence spans 163 residues: Cytochrome c-type biogenesis protein CcmE (163 aa).

Over 1–8 (MNPRRKKR) the chain is Cytoplasmic. Residues 9–29 (LTIILAISAGLAAVIGLVLYA) traverse the membrane as a helical; Signal-anchor for type II membrane protein segment. The Periplasmic segment spans residues 30–163 (LSQNIDLFYT…TEAQLKGSKQ (134 aa)). Heme contacts are provided by His-131 and Tyr-135.

Belongs to the CcmE/CycJ family.

The protein localises to the cell inner membrane. Heme chaperone required for the biogenesis of c-type cytochromes. Transiently binds heme delivered by CcmC and transfers the heme to apo-cytochromes in a process facilitated by CcmF and CcmH. The polypeptide is Cytochrome c-type biogenesis protein CcmE (Aeromonas hydrophila subsp. hydrophila (strain ATCC 7966 / DSM 30187 / BCRC 13018 / CCUG 14551 / JCM 1027 / KCTC 2358 / NCIMB 9240 / NCTC 8049)).